The sequence spans 430 residues: Adenylosuccinate synthetase (430 aa).

GTP is bound by residues 13–19 (GDEGKGK) and 41–43 (GHT). Asp-14 acts as the Proton acceptor in catalysis. 2 residues coordinate Mg(2+): Asp-14 and Gly-41. IMP is bound by residues 14–17 (DEGK), 39–42 (NAGH), Thr-130, Arg-144, Gln-225, Thr-240, and Arg-304. The active-site Proton donor is His-42. 300-306 (ATTGRKR) provides a ligand contact to substrate. Residues Arg-306, 332–334 (KLD), and 414–416 (STG) contribute to the GTP site.

Belongs to the adenylosuccinate synthetase family. In terms of assembly, homodimer. Mg(2+) is required as a cofactor.

The protein localises to the cytoplasm. The enzyme catalyses IMP + L-aspartate + GTP = N(6)-(1,2-dicarboxyethyl)-AMP + GDP + phosphate + 2 H(+). It functions in the pathway purine metabolism; AMP biosynthesis via de novo pathway; AMP from IMP: step 1/2. In terms of biological role, plays an important role in the de novo pathway of purine nucleotide biosynthesis. Catalyzes the first committed step in the biosynthesis of AMP from IMP. This Teredinibacter turnerae (strain ATCC 39867 / T7901) protein is Adenylosuccinate synthetase.